A 124-amino-acid polypeptide reads, in one-letter code: Small ribosomal subunit protein uS12 (124 aa).

Asp89 bears the 3-methylthioaspartic acid mark. The tract at residues Gln105 to Ser124 is disordered. Positions Lys108–Gly118 are enriched in basic residues.

The protein belongs to the universal ribosomal protein uS12 family. As to quaternary structure, part of the 30S ribosomal subunit. Contacts proteins S8 and S17. May interact with IF1 in the 30S initiation complex.

In terms of biological role, with S4 and S5 plays an important role in translational accuracy. Interacts with and stabilizes bases of the 16S rRNA that are involved in tRNA selection in the A site and with the mRNA backbone. Located at the interface of the 30S and 50S subunits, it traverses the body of the 30S subunit contacting proteins on the other side and probably holding the rRNA structure together. The combined cluster of proteins S8, S12 and S17 appears to hold together the shoulder and platform of the 30S subunit. The protein is Small ribosomal subunit protein uS12 of Mycobacterium sp. (strain JLS).